The sequence spans 319 residues: MNPEYLDFEQPIAELEYKLNELKQFSEQSKVDISDEVERLKTKLERLTGDIYSDLSDWQIAQVARHPKRPYTLDYIPHIFTDFRELHGDRHYADDMAIVGGLARLGQRSVMVIGHEKGRDTKAKVSRNFGMPRPEGYRKALRLMKLAEKFKIPVITFIDTPGAYPGVGAEKRGQSEAIARNLYEMAVLNTPIIACVIGEGGSGGALALGVADTVMMLQYGMYSVISPEGCASILWRDAAMAEEAVTILQVTSTRLKKLNLIDTIITEPSGGAHRDVAEMSRTLHDAFLSELDRLEAMDDATRIHQRLQKLRAYGNFLGE.

The 258-residue stretch at 36–293 (EVERLKTKLE…HDAFLSELDR (258 aa)) folds into the CoA carboxyltransferase C-terminal domain.

This sequence belongs to the AccA family. In terms of assembly, acetyl-CoA carboxylase is a heterohexamer composed of biotin carboxyl carrier protein (AccB), biotin carboxylase (AccC) and two subunits each of ACCase subunit alpha (AccA) and ACCase subunit beta (AccD).

The protein localises to the cytoplasm. The enzyme catalyses N(6)-carboxybiotinyl-L-lysyl-[protein] + acetyl-CoA = N(6)-biotinyl-L-lysyl-[protein] + malonyl-CoA. The protein operates within lipid metabolism; malonyl-CoA biosynthesis; malonyl-CoA from acetyl-CoA: step 1/1. Functionally, component of the acetyl coenzyme A carboxylase (ACC) complex. First, biotin carboxylase catalyzes the carboxylation of biotin on its carrier protein (BCCP) and then the CO(2) group is transferred by the carboxyltransferase to acetyl-CoA to form malonyl-CoA. This Dichelobacter nodosus (strain VCS1703A) protein is Acetyl-coenzyme A carboxylase carboxyl transferase subunit alpha.